We begin with the raw amino-acid sequence, 601 residues long: Elongation factor 4 (601 aa).

The 183-residue stretch at Ser-7 to Gln-189 folds into the tr-type G domain. GTP-binding positions include Asp-19–Thr-24 and Asn-136–Asp-139.

This sequence belongs to the TRAFAC class translation factor GTPase superfamily. Classic translation factor GTPase family. LepA subfamily.

Its subcellular location is the cell inner membrane. The catalysed reaction is GTP + H2O = GDP + phosphate + H(+). Required for accurate and efficient protein synthesis under certain stress conditions. May act as a fidelity factor of the translation reaction, by catalyzing a one-codon backward translocation of tRNAs on improperly translocated ribosomes. Back-translocation proceeds from a post-translocation (POST) complex to a pre-translocation (PRE) complex, thus giving elongation factor G a second chance to translocate the tRNAs correctly. Binds to ribosomes in a GTP-dependent manner. This is Elongation factor 4 from Trichodesmium erythraeum (strain IMS101).